Consider the following 300-residue polypeptide: MTDTPDPAAVLSPAVKAAVLSEALPYIRRFHGKTIVVKYGGNAMTEERLQRSFAHDVVLLKLVGLNPVVVHGGGPQIDDALRRIGKQGTFVQGIRVTDAETMEVVEWVLGGQVQQDIVMMINEVGGKAVGLTGKDGMLIQATKKLMVNKDDPSQPLDIGFVGDITRVEPAVVKALQDDQFIPVISPIGYGEDGTAYNINADVVAGKMAEVLGAEKLLMMTNTPGVLDKGGKLLRSLSAQTIDELFADGTISGGMLPKISSSLDAAKNGVNSVHIVDGRVPHCLLLEILTDQGVGTMISSH.

Residues glycine 73–glycine 74, arginine 95, and asparagine 197 contribute to the substrate site.

It belongs to the acetylglutamate kinase family. ArgB subfamily.

Its subcellular location is the cytoplasm. It carries out the reaction N-acetyl-L-glutamate + ATP = N-acetyl-L-glutamyl 5-phosphate + ADP. It functions in the pathway amino-acid biosynthesis; L-arginine biosynthesis; N(2)-acetyl-L-ornithine from L-glutamate: step 2/4. Its function is as follows. Catalyzes the ATP-dependent phosphorylation of N-acetyl-L-glutamate. In Bordetella parapertussis (strain 12822 / ATCC BAA-587 / NCTC 13253), this protein is Acetylglutamate kinase.